We begin with the raw amino-acid sequence, 784 residues long: Alpha-catulin (784 aa).

Residues 35–247 (IKTKSIEQTL…LLLTASKTYL (213 aa)) are vinculin/alpha-catenin homology 1 (VH1) region. Positions 387–414 (ASGLEVTVERLNRRLKDLSKQLQIVAME) form a coiled coil. Residues 552-696 (PRPGKHGTTQ…MVKSPTVGKT (145 aa)) are vinculin/alpha-catenin homology 2 (VH2) region. The tract at residues 737-784 (GSVNGRTGADGERTSRESTVWRRTPSIRRAAPPTSSHLSANNSSSIHI) is disordered. Positions 745 to 756 (ADGERTSRESTV) are enriched in basic and acidic residues. Low complexity predominate over residues 771–784 (SSHLSANNSSSIHI).

It belongs to the vinculin/alpha-catenin family. As to quaternary structure, interacts with slo-1 (via C-terminus); the interaction is required for localization of slo-1 to dense bodies in body wall muscle cells. Interacts (via N-terminus) with dystrophin complex member dyb-1 (via C-terminus); the interaction is required for localization of the dystrophin complex and ctn-1 near dense bodies in muscle cells. In terms of tissue distribution, expressed in body wall muscles, vulval muscles, stomatointestinal cells and pharyngeal muscle cells. Expressed in enteric muscles, nerve ring neurons and in the ventral nerve cord.

It is found in the cytoplasm. Functionally, required for slo-1 potassium ion channel clustering at presynaptic terminals and in egg-laying muscles; clustering of slo-1 mediates the intoxicating and sedatory effects of ethanol on worms. Required for slo-1 localization to dense bodies in body wall muscle cells. Maintains the localization of the dystrophin complex near muscle cell dense bodies via its interaction with complex member dyb-1 which is required for slo-1 localization in muscle while slo-1 localization in neurons is independent of the dystrophin complex. This is Alpha-catulin from Caenorhabditis elegans.